Here is a 469-residue protein sequence, read N- to C-terminus: UDP-N-acetylmuramoylalanine--D-glutamate ligase (469 aa).

Residue 121–127 (GTNGKST) participates in ATP binding.

The protein belongs to the MurCDEF family.

It is found in the cytoplasm. It carries out the reaction UDP-N-acetyl-alpha-D-muramoyl-L-alanine + D-glutamate + ATP = UDP-N-acetyl-alpha-D-muramoyl-L-alanyl-D-glutamate + ADP + phosphate + H(+). It participates in cell wall biogenesis; peptidoglycan biosynthesis. Functionally, cell wall formation. Catalyzes the addition of glutamate to the nucleotide precursor UDP-N-acetylmuramoyl-L-alanine (UMA). This chain is UDP-N-acetylmuramoylalanine--D-glutamate ligase, found in Agrobacterium fabrum (strain C58 / ATCC 33970) (Agrobacterium tumefaciens (strain C58)).